The sequence spans 172 residues: Adenine phosphoribosyltransferase (172 aa).

It belongs to the purine/pyrimidine phosphoribosyltransferase family. In terms of assembly, homodimer.

Its subcellular location is the cytoplasm. It catalyses the reaction AMP + diphosphate = 5-phospho-alpha-D-ribose 1-diphosphate + adenine. Its pathway is purine metabolism; AMP biosynthesis via salvage pathway; AMP from adenine: step 1/1. Its function is as follows. Catalyzes a salvage reaction resulting in the formation of AMP, that is energically less costly than de novo synthesis. This chain is Adenine phosphoribosyltransferase, found in Prochlorococcus marinus (strain MIT 9211).